We begin with the raw amino-acid sequence, 484 residues long: Adenylosuccinate lyase (484 aa).

A2 carries the post-translational modification N-acetylalanine. Substrate contacts are provided by residues 20–21 (RY), 85–87 (RHD), and 111–112 (TS). N6-acetyllysine is present on K147. Catalysis depends on H159, which acts as the Proton donor/acceptor. A substrate-binding site is contributed by Q241. S289 serves as the catalytic Proton donor/acceptor. The residue at position 295 (K295) is an N6-acetyllysine. The substrate site is built by R303, R329, S334, and R338. K415 is covalently cross-linked (Glycyl lysine isopeptide (Lys-Gly) (interchain with G-Cter in SUMO1)).

This sequence belongs to the lyase 1 family. Adenylosuccinate lyase subfamily. Homotetramer. Residues from neighboring subunits contribute catalytic and substrate-binding residues to each active site.

It carries out the reaction N(6)-(1,2-dicarboxyethyl)-AMP = fumarate + AMP. It catalyses the reaction (2S)-2-[5-amino-1-(5-phospho-beta-D-ribosyl)imidazole-4-carboxamido]succinate = 5-amino-1-(5-phospho-beta-D-ribosyl)imidazole-4-carboxamide + fumarate. The protein operates within purine metabolism; AMP biosynthesis via de novo pathway; AMP from IMP: step 2/2. It participates in purine metabolism; IMP biosynthesis via de novo pathway; 5-amino-1-(5-phospho-D-ribosyl)imidazole-4-carboxamide from 5-amino-1-(5-phospho-D-ribosyl)imidazole-4-carboxylate: step 2/2. Functionally, catalyzes two non-sequential steps in de novo AMP synthesis: converts (S)-2-(5-amino-1-(5-phospho-D-ribosyl)imidazole-4-carboxamido)succinate (SAICAR) to fumarate plus 5-amino-1-(5-phospho-D-ribosyl)imidazole-4-carboxamide, and thereby also contributes to de novo IMP synthesis, and converts succinyladenosine monophosphate (SAMP) to AMP and fumarate. The sequence is that of Adenylosuccinate lyase (ADSL) from Macaca fascicularis (Crab-eating macaque).